Reading from the N-terminus, the 171-residue chain is Co-chaperone protein HscB (171 aa).

A J domain is found at 2–74; that stretch reads DYFTLFGLPA…LTRAEYLLSL (73 aa).

This sequence belongs to the HscB family. As to quaternary structure, interacts with HscA and stimulates its ATPase activity. Interacts with IscU.

In terms of biological role, co-chaperone involved in the maturation of iron-sulfur cluster-containing proteins. Seems to help targeting proteins to be folded toward HscA. The chain is Co-chaperone protein HscB from Citrobacter koseri (strain ATCC BAA-895 / CDC 4225-83 / SGSC4696).